Reading from the N-terminus, the 251-residue chain is Imidazole glycerol phosphate synthase subunit HisF (251 aa).

Active-site residues include aspartate 11 and aspartate 130.

Belongs to the HisA/HisF family. In terms of assembly, heterodimer of HisH and HisF.

Its subcellular location is the cytoplasm. The catalysed reaction is 5-[(5-phospho-1-deoxy-D-ribulos-1-ylimino)methylamino]-1-(5-phospho-beta-D-ribosyl)imidazole-4-carboxamide + L-glutamine = D-erythro-1-(imidazol-4-yl)glycerol 3-phosphate + 5-amino-1-(5-phospho-beta-D-ribosyl)imidazole-4-carboxamide + L-glutamate + H(+). It participates in amino-acid biosynthesis; L-histidine biosynthesis; L-histidine from 5-phospho-alpha-D-ribose 1-diphosphate: step 5/9. Functionally, IGPS catalyzes the conversion of PRFAR and glutamine to IGP, AICAR and glutamate. The HisF subunit catalyzes the cyclization activity that produces IGP and AICAR from PRFAR using the ammonia provided by the HisH subunit. This chain is Imidazole glycerol phosphate synthase subunit HisF, found in Chlorobium phaeovibrioides (strain DSM 265 / 1930) (Prosthecochloris vibrioformis (strain DSM 265)).